We begin with the raw amino-acid sequence, 799 residues long: Armadillo repeat-containing protein wrm-1 (799 aa).

The span at 1 to 10 shows a compositional bias: basic and acidic residues; sequence MEERGPDIEK. The interval 1 to 60 is disordered; it reads MEERGPDIEKYGSQPCTPLSFDPMLPSTSRVATPVRPSSTLSARQAPASPFRAQPQNMEP. Over residues 26–43 the composition is skewed to polar residues; that stretch reads PSTSRVATPVRPSSTLSA. An ARM repeat occupies 454 to 496; the sequence is ESIRRVIQVVGSDDATIAERATGVLRNIGQPNKQNKVIMVRNG.

In terms of assembly, interacts (independently of ARM repeat) with nhr-25. Component of the beta-catenin-lit-1 complex (also called the lit-1/wrm-1 complex or the wrm-1/lit-1 kinase complex) at least composed of lit-1 and wrm-1. Interacts (via N-terminus) with lit-1; the interaction is direct and activates lit-1 kinase activity which leads to the phosphorylation of pop-1. This promotes pop-1 interaction with par-5 and translocation of pop-1 from the nucleus to the cytoplasm.

The protein localises to the cytoplasm. It is found in the cell cortex. It localises to the nucleus. Functionally, antagonistic role in the Wnt signaling pathway that operates in embryogenesis. When located at the cortex it has been shown to inhibit Wnt signaling during asymmetric cell division but when relocated to the nucleus it shows positive regulation. Has a role in blastomere signaling during endoderm specification. Component of the beta-catenin-lit-1 complex which promotes phosphorylation, down-regulation and subcellular relocation of pop-1. Within the complex, activates lit-1-dependent kinase activity. Can substitute for bar-1 indicating functional redundancy. Appears to have a role in centrosome positioning. Involved in the development of distal tip cells (DTC) by regulating the asymmetric distribution of cye-1 and cki-1 between the daughters of Z1.a and Z4.p cells. This chain is Armadillo repeat-containing protein wrm-1, found in Caenorhabditis briggsae.